The sequence spans 150 residues: Small ribosomal subunit protein uS11y (150 aa).

Ser19 carries the phosphoserine modification.

The protein belongs to the universal ribosomal protein uS11 family.

It is found in the cytoplasm. In Arabidopsis thaliana (Mouse-ear cress), this protein is Small ribosomal subunit protein uS11y (RPS14B).